Consider the following 36-residue polypeptide: Protein P4 (36 aa).

The chain crosses the membrane as a helical span at residues 13 to 33 (GLQLSLLICACLLAVLIVSFC).

The protein resides in the host membrane. The sequence is that of Protein P4 from Vitis vinifera (Grape).